Consider the following 95-residue polypeptide: Co-chaperonin GroES (95 aa).

Belongs to the GroES chaperonin family. In terms of assembly, heptamer of 7 subunits arranged in a ring. Interacts with the chaperonin GroEL.

Its subcellular location is the cytoplasm. Together with the chaperonin GroEL, plays an essential role in assisting protein folding. The GroEL-GroES system forms a nano-cage that allows encapsulation of the non-native substrate proteins and provides a physical environment optimized to promote and accelerate protein folding. GroES binds to the apical surface of the GroEL ring, thereby capping the opening of the GroEL channel. In Ruthia magnifica subsp. Calyptogena magnifica, this protein is Co-chaperonin GroES.